Consider the following 225-residue polypeptide: Rho GDP-dissociation inhibitor 3 (225 aa).

This sequence belongs to the Rho GDI family.

It localises to the cytoplasm. Functionally, inhibits GDP/GTP exchange reaction of RhoB. Interacts specifically with the GDP- and GTP-bound forms of post-translationally processed Rhob and Rhog proteins, both of which show a growth-regulated expression in mammalian cells. Stimulates the release of the GDP-bound but not the GTP-bound RhoB protein. Also inhibits the GDP/GTP exchange of RhoB but shows less ability to inhibit the dissociation of prebound GTP. The sequence is that of Rho GDP-dissociation inhibitor 3 (ARHGDIG) from Bos taurus (Bovine).